The sequence spans 127 residues: Large ribosomal subunit protein bL12 (127 aa).

Positions 98-127 (PKPIKEGAPKAEAESLKSKLEEAGAEVELK) are disordered.

This sequence belongs to the bacterial ribosomal protein bL12 family. As to quaternary structure, homodimer. Part of the ribosomal stalk of the 50S ribosomal subunit. Forms a multimeric L10(L12)X complex, where L10 forms an elongated spine to which 2 to 4 L12 dimers bind in a sequential fashion. Binds GTP-bound translation factors.

Functionally, forms part of the ribosomal stalk which helps the ribosome interact with GTP-bound translation factors. Is thus essential for accurate translation. The protein is Large ribosomal subunit protein bL12 of Amoebophilus asiaticus (strain 5a2).